The primary structure comprises 78 residues: Dihydrofolate reductase type 2 (78 aa).

NADP(+) contacts are provided by residues Lys-32 and 66-69 (VQIY). Ile-68 contributes to the substrate binding site.

In terms of assembly, homotetramer.

It carries out the reaction (6S)-5,6,7,8-tetrahydrofolate + NADP(+) = 7,8-dihydrofolate + NADPH + H(+). It participates in cofactor biosynthesis; tetrahydrofolate biosynthesis; 5,6,7,8-tetrahydrofolate from 7,8-dihydrofolate: step 1/1. Its function is as follows. Key enzyme in folate metabolism. Catalyzes an essential reaction for de novo glycine and purine synthesis, and for DNA precursor synthesis. This is Dihydrofolate reductase type 2 from Escherichia coli.